Here is a 259-residue protein sequence, read N- to C-terminus: MNWLEAFILGIIQGLTEFLPISSTGHLYLGRHLFQLDEAGLFLDTMLHIGTLLAVFIYYKKEFIYLIKNPFSKLMLLLIVGTIPAVVIGLLFKDFFEDISKTGITIGWEFLVTGFFLYMADKXKNGRKKMDDITYKDAFIIGSFXAVAIFPAISRSGMTIVAALWRKLDRETAAYFSFLLSTPAIVGAIILQFVDVFQGKAESISSTSLIVGTLSAAFFGYIAVSWMIQYLKRHSLKVFAYYVWGLGILILTLQFTRVF.

Helical transmembrane passes span 1-21, 39-59, 71-91, 99-119, 133-153, 174-194, 208-228, and 236-256; these read MNWLEAFILGIIQGLTEFLPI, AGLFLDTMLHIGTLLAVFIYY, FSKLMLLLIVGTIPAVVIGLL, ISKTGITIGWEFLVTGFFLYM, ITYKDAFIIGSFXAVAIFPAI, AYFSFLLSTPAIVGAIILQFV, SLIVGTLSAAFFGYIAVSWMI, and LKVFAYYVWGLGILILTLQFT.

Belongs to the UppP family.

It localises to the cell membrane. It catalyses the reaction di-trans,octa-cis-undecaprenyl diphosphate + H2O = di-trans,octa-cis-undecaprenyl phosphate + phosphate + H(+). Catalyzes the dephosphorylation of undecaprenyl diphosphate (UPP). Confers resistance to bacitracin. The protein is Undecaprenyl-diphosphatase 3 of Bacillus cereus (strain ATCC 10987 / NRS 248).